The following is a 112-amino-acid chain: Transmembrane protein 14C (112 aa).

Helical transmembrane passes span 7–27 (VVPL…GGII), 32–52 (AGSV…SLGA), 62–82 (VWVF…RFYH), and 86–106 (FMPA…VGVS).

It belongs to the TMEM14 family.

Its subcellular location is the mitochondrion membrane. In terms of biological role, required for normal heme biosynthesis. This chain is Transmembrane protein 14C (TMEM14C), found in Pongo abelii (Sumatran orangutan).